The following is a 184-amino-acid chain: Protein GrpE (184 aa).

Over residues 1–14 (MANEQNEQSQDLSS) the composition is skewed to polar residues. Residues 1–35 (MANEQNEQSQDLSSEQTTQDHEQTQTEGVEQGAEI) form a disordered region.

This sequence belongs to the GrpE family. As to quaternary structure, homodimer.

It is found in the cytoplasm. In terms of biological role, participates actively in the response to hyperosmotic and heat shock by preventing the aggregation of stress-denatured proteins, in association with DnaK and GrpE. It is the nucleotide exchange factor for DnaK and may function as a thermosensor. Unfolded proteins bind initially to DnaJ; upon interaction with the DnaJ-bound protein, DnaK hydrolyzes its bound ATP, resulting in the formation of a stable complex. GrpE releases ADP from DnaK; ATP binding to DnaK triggers the release of the substrate protein, thus completing the reaction cycle. Several rounds of ATP-dependent interactions between DnaJ, DnaK and GrpE are required for fully efficient folding. The protein is Protein GrpE of Acinetobacter baylyi (strain ATCC 33305 / BD413 / ADP1).